Here is a 41-residue protein sequence, read N- to C-terminus: Large ribosomal subunit protein bL36 (41 aa).

It belongs to the bacterial ribosomal protein bL36 family.

In Bartonella bacilliformis (strain ATCC 35685 / KC583 / Herrer 020/F12,63), this protein is Large ribosomal subunit protein bL36.